Consider the following 274-residue polypeptide: Diaminopimelate epimerase (274 aa).

Substrate is bound by residues N13, Q47, and N65. The Proton donor role is filled by C74. Substrate is bound by residues 75–76 (GN), N149, N182, and 200–201 (ER). C209 serves as the catalytic Proton acceptor. 210–211 (GT) serves as a coordination point for substrate.

This sequence belongs to the diaminopimelate epimerase family. As to quaternary structure, homodimer.

Its subcellular location is the cytoplasm. The catalysed reaction is (2S,6S)-2,6-diaminopimelate = meso-2,6-diaminopimelate. It participates in amino-acid biosynthesis; L-lysine biosynthesis via DAP pathway; DL-2,6-diaminopimelate from LL-2,6-diaminopimelate: step 1/1. Functionally, catalyzes the stereoinversion of LL-2,6-diaminopimelate (L,L-DAP) to meso-diaminopimelate (meso-DAP), a precursor of L-lysine and an essential component of the bacterial peptidoglycan. This chain is Diaminopimelate epimerase, found in Rhizorhabdus wittichii (strain DSM 6014 / CCUG 31198 / JCM 15750 / NBRC 105917 / EY 4224 / RW1) (Sphingomonas wittichii).